The sequence spans 204 residues: Holliday junction branch migration complex subunit RuvA (204 aa).

The tract at residues Met-1 to Asn-64 is domain I. The segment at Ser-65–Asp-143 is domain II. The interval Ala-144–Glu-155 is flexible linker. Residues Thr-156–Ile-204 form a domain III region.

This sequence belongs to the RuvA family. In terms of assembly, homotetramer. Forms an RuvA(8)-RuvB(12)-Holliday junction (HJ) complex. HJ DNA is sandwiched between 2 RuvA tetramers; dsDNA enters through RuvA and exits via RuvB. An RuvB hexamer assembles on each DNA strand where it exits the tetramer. Each RuvB hexamer is contacted by two RuvA subunits (via domain III) on 2 adjacent RuvB subunits; this complex drives branch migration. In the full resolvosome a probable DNA-RuvA(4)-RuvB(12)-RuvC(2) complex forms which resolves the HJ.

The protein resides in the cytoplasm. Its function is as follows. The RuvA-RuvB-RuvC complex processes Holliday junction (HJ) DNA during genetic recombination and DNA repair, while the RuvA-RuvB complex plays an important role in the rescue of blocked DNA replication forks via replication fork reversal (RFR). RuvA specifically binds to HJ cruciform DNA, conferring on it an open structure. The RuvB hexamer acts as an ATP-dependent pump, pulling dsDNA into and through the RuvAB complex. HJ branch migration allows RuvC to scan DNA until it finds its consensus sequence, where it cleaves and resolves the cruciform DNA. The chain is Holliday junction branch migration complex subunit RuvA from Erwinia tasmaniensis (strain DSM 17950 / CFBP 7177 / CIP 109463 / NCPPB 4357 / Et1/99).